The sequence spans 89 residues: ATP synthase subunit c, sodium ion specific (89 aa).

2 consecutive transmembrane segments (helical) span residues 9–29 (VVLA…IGPG) and 68–88 (GIYS…VGLL).

The protein belongs to the ATPase C chain family. In terms of assembly, F-type ATPases have 2 components, F(1) - the catalytic core - and F(0) - the membrane sodium channel. F(1) has five subunits: alpha(3), beta(3), gamma(1), delta(1), epsilon(1). F(0) has three main subunits: a(1), b(2) and c(10-14). The alpha and beta chains form an alternating ring which encloses part of the gamma chain. F(1) is attached to F(0) by a central stalk formed by the gamma and epsilon chains, while a peripheral stalk is formed by the delta and b chains.

It localises to the cell membrane. In terms of biological role, f(1)F(0) ATP synthase produces ATP from ADP in the presence of a proton or sodium gradient. F-type ATPases consist of two structural domains, F(1) containing the extramembraneous catalytic core and F(0) containing the membrane sodium channel, linked together by a central stalk and a peripheral stalk. During catalysis, ATP synthesis in the catalytic domain of F(1) is coupled via a rotary mechanism of the central stalk subunits to sodium translocation. Its function is as follows. Key component of the F(0) channel; it plays a direct role in translocation across the membrane. A homomeric c-ring of between 10-14 subunits forms the central stalk rotor element with the F(1) delta and epsilon subunits. The sequence is that of ATP synthase subunit c, sodium ion specific (atpE) from Propionigenium modestum.